Reading from the N-terminus, the 218-residue chain is Peptide methionine sulfoxide reductase A2 (218 aa).

A compositionally biased stretch (polar residues) spans 1 to 19 (MDSSLKTQEPQVVETSPSP). A disordered region spans residues 1–30 (MDSSLKTQEPQVVETSPSPVAQEPPQVADK). A Phosphoserine modification is found at Ser205.

This sequence belongs to the MsrA Met sulfoxide reductase family.

The protein localises to the cytoplasm. The protein resides in the cytosol. It catalyses the reaction L-methionyl-[protein] + [thioredoxin]-disulfide + H2O = L-methionyl-(S)-S-oxide-[protein] + [thioredoxin]-dithiol. It carries out the reaction [thioredoxin]-disulfide + L-methionine + H2O = L-methionine (S)-S-oxide + [thioredoxin]-dithiol. Its activity is regulated as follows. Activated during dark in short day conditions. Functionally, catalyzes the reduction of methionine sulfoxide (MetSO) to methionine in proteins. Plays a protective role against oxidative stress by restoring activity to proteins that have been inactivated by methionine oxidation. Prevents cellular oxidative damage in long nights. MSRA family specifically reduces the MetSO S-enantiomer. In Arabidopsis thaliana (Mouse-ear cress), this protein is Peptide methionine sulfoxide reductase A2 (MRSA2).